The following is a 429-amino-acid chain: 46 kDa membrane protein (429 aa).

The next 9 membrane-spanning stretches (helical) occupy residues 26–46 (AALT…EDVF), 51–71 (TGID…VSVL), 99–119 (LVLV…VLLI), 173–193 (FLIH…ALLP), 224–244 (LLIK…AHPV), 279–299 (TLLF…TDVV), 315–335 (LLTV…IDNI), 360–380 (ILWW…AVGA), and 407–427 (IAVT…RYLV).

Belongs to the CitM (TC 2.A.11) transporter family.

It localises to the cell membrane. The chain is 46 kDa membrane protein (ag45) from Mycobacterium leprae (strain TN).